We begin with the raw amino-acid sequence, 119 residues long: NADH-quinone oxidoreductase subunit A (119 aa).

The next 3 membrane-spanning stretches (helical) occupy residues I9 to I29, L63 to V83, and I88 to I108.

The protein belongs to the complex I subunit 3 family. In terms of assembly, NDH-1 is composed of 14 different subunits. Subunits NuoA, H, J, K, L, M, N constitute the membrane sector of the complex.

The protein resides in the cell inner membrane. The enzyme catalyses a quinone + NADH + 5 H(+)(in) = a quinol + NAD(+) + 4 H(+)(out). In terms of biological role, NDH-1 shuttles electrons from NADH, via FMN and iron-sulfur (Fe-S) centers, to quinones in the respiratory chain. The immediate electron acceptor for the enzyme in this species is believed to be ubiquinone. Couples the redox reaction to proton translocation (for every two electrons transferred, four hydrogen ions are translocated across the cytoplasmic membrane), and thus conserves the redox energy in a proton gradient. The polypeptide is NADH-quinone oxidoreductase subunit A (Albidiferax ferrireducens (strain ATCC BAA-621 / DSM 15236 / T118) (Rhodoferax ferrireducens)).